The following is a 235-amino-acid chain: Ribose-5-phosphate isomerase A (235 aa).

Residues 32-35 (TGST), 89-92 (DGAD), and 102-105 (KGGG) contribute to the substrate site. The Proton acceptor role is filled by E111. K129 provides a ligand contact to substrate.

Belongs to the ribose 5-phosphate isomerase family. As to quaternary structure, homodimer.

The catalysed reaction is aldehydo-D-ribose 5-phosphate = D-ribulose 5-phosphate. Its pathway is carbohydrate degradation; pentose phosphate pathway; D-ribose 5-phosphate from D-ribulose 5-phosphate (non-oxidative stage): step 1/1. Functionally, catalyzes the reversible conversion of ribose-5-phosphate to ribulose 5-phosphate. The protein is Ribose-5-phosphate isomerase A of Synechocystis sp. (strain ATCC 27184 / PCC 6803 / Kazusa).